The following is a 301-amino-acid chain: D-alanine--D-alanine ligase (301 aa).

One can recognise an ATP-grasp domain in the interval 99–294 (KSVLEANGIR…FSELIDMIIQ (196 aa)). 126–181 (INELGYPVVVKPTHGGSSVATFIVKEEKEIENCVSEAFKWDSEVMIEKFIKGDEIT) lines the ATP pocket. Mg(2+)-binding residues include Asp248, Glu261, and Asn263.

The protein belongs to the D-alanine--D-alanine ligase family. Requires Mg(2+) as cofactor. It depends on Mn(2+) as a cofactor.

It is found in the cytoplasm. It catalyses the reaction 2 D-alanine + ATP = D-alanyl-D-alanine + ADP + phosphate + H(+). It participates in cell wall biogenesis; peptidoglycan biosynthesis. In terms of biological role, cell wall formation. The protein is D-alanine--D-alanine ligase of Clostridium beijerinckii (strain ATCC 51743 / NCIMB 8052) (Clostridium acetobutylicum).